We begin with the raw amino-acid sequence, 280 residues long: Transcription factor HES-1 (280 aa).

A disordered region spans residues 1–44 (MPADIMEKNSSSPVAATPASVNTTPDKPKTASEHRKSSKPIMEK). Residues 10–21 (SSSPVAATPASV) show a composition bias toward low complexity. Basic and acidic residues predominate over residues 26–35 (DKPKTASEHR). The bHLH domain occupies 34–91 (HRKSSKPIMEKRRRARINESLSQLKTLILDALKKDSSRHSKLEKADILEMTVKHLRNL). Residues 110 to 143 (YRAGFSECMNEVTRFLSTCEGVNTEVRTRLLGHL) form the Orange domain. 2 disordered regions span residues 157–200 (GQPH…PPGG) and 254–280 (TSVGPNAVSPSSGPSLTADSMWRPWRN). Pro residues-rich tracts occupy residues 164–174 (QAPPPPPPGPG) and 181–200 (FAPPPPLVPIPGGAAPPPGG). Polar residues predominate over residues 254-271 (TSVGPNAVSPSSGPSLTA). A WRPW motif motif is present at residues 275-278 (WRPW).

Transcription repression requires formation of a complex with a corepressor protein of the Groucho/TLE family. Interacts (via WPRW motif) with TLE1, and more weakly with TLE2. Interacts with HES6. Interacts with SIRT1. Interacts with an FA complex, composed of FANCA, FANCF, FANCG and FANCL, but not of FANCC, nor FANCE. (Microbial infection) Ubiquitinated via human cytomegalovirus/HCMV protein IE1 that assembles a HES1 ubiquitination complex; leading to HES1 proteasomal degradation.

It is found in the nucleus. Functionally, transcriptional repressor of genes that require a bHLH protein for their transcription. May act as a negative regulator of myogenesis by inhibiting the functions of MYOD1 and ASH1. Binds DNA on N-box motifs: 5'-CACNAG-3' with high affinity and on E-box motifs: 5'-CANNTG-3' with low affinity. May play a role in a functional FA core complex response to DNA cross-link damage, being required for the stability and nuclear localization of FA core complex proteins, as well as for FANCD2 monoubiquitination in response to DNA damage. The polypeptide is Transcription factor HES-1 (HES1) (Homo sapiens (Human)).